A 170-amino-acid polypeptide reads, in one-letter code: Adenine phosphoribosyltransferase (170 aa).

This sequence belongs to the purine/pyrimidine phosphoribosyltransferase family. In terms of assembly, homodimer.

The protein localises to the cytoplasm. It carries out the reaction AMP + diphosphate = 5-phospho-alpha-D-ribose 1-diphosphate + adenine. The protein operates within purine metabolism; AMP biosynthesis via salvage pathway; AMP from adenine: step 1/1. Catalyzes a salvage reaction resulting in the formation of AMP, that is energically less costly than de novo synthesis. The sequence is that of Adenine phosphoribosyltransferase from Enterococcus faecalis (strain ATCC 700802 / V583).